We begin with the raw amino-acid sequence, 984 residues long: Mineralocorticoid receptor (984 aa).

Residues 1–602 (METKGYHSLP…STGSSRPSKI (602 aa)) are modulating. The segment covering 231 to 243 (QGTPLTCSPNVEN) has biased composition (polar residues). 2 disordered regions span residues 231–329 (QGTP…AAST) and 346–369 (SGTS…EKGA). Ser250, Ser259, Ser283, Ser287, and Ser299 each carry phosphoserine. A compositionally biased stretch (low complexity) spans 259–291 (SPLSSPLSSMKSSISSPPSHCSVKSPVSSPNNV). Positions 292–329 (TLRSSVSSPANINNSRCSVSSPSNTNNRSTLSSPAAST) are enriched in polar residues. Positions 346–355 (SGTSAGSSTS) are enriched in low complexity. Zn(2+) contacts are provided by Cys603, Cys606, Cys620, Cys623, Cys639, Cys645, Cys655, and Cys658. 2 NR C4-type zinc fingers span residues 603–623 (CLVC…CGSC) and 639–663 (CAGR…LQKC). A DNA-binding region (nuclear receptor) is located at residues 603–668 (CLVCGDEASG…RLQKCLQAGM (66 aa)). The segment at 669–725 (NLGARKSKKLGKLKGIHEEQPQQQQPPPPPPPPQSPEEGTTYIAPAKEPSVNTALVP) is hinge. Residues 684–710 (IHEEQPQQQQPPPPPPPPQSPEEGTTY) form a disordered region. The segment covering 692 to 703 (QQPPPPPPPPQS) has biased composition (pro residues). The region spanning 726-964 (QLSTISRALT…EFPAMLVEII (239 aa)) is the NR LBD domain. Residues Asn770 and Gln776 each coordinate 21-hydroxyprogesterone. 2 residues coordinate aldosterone: Asn770 and Gln776. Progesterone is bound by residues Asn770 and Gln776. The segment at 782–785 (KWAK) is important for coactivator binding. 21-hydroxyprogesterone is bound by residues Arg817 and Thr945. Aldosterone contacts are provided by Arg817 and Thr945. Arg817 and Thr945 together coordinate progesterone.

The protein belongs to the nuclear hormone receptor family. NR3 subfamily. In terms of assembly, heteromultimeric cytoplasmic complex with HSP90, HSP70, and FKBP4, in the absence of ligand. After ligand binding, it translocates to the nucleus and binds to DNA as a homodimer and as a heterodimer with NR3C1. Binds the coactivator NCOA2. May interact with HSD11B2 in the absence of ligand. Binds the coactivators NCOA1, TIF1 and NRIP1. Phosphorylated.

It localises to the cytoplasm. The protein resides in the nucleus. Its subcellular location is the endoplasmic reticulum membrane. Its function is as follows. Receptor for both mineralocorticoids (MC) such as aldosterone and glucocorticoids (GC) such as corticosterone or cortisol. Binds to mineralocorticoid response elements (MRE) and transactivates target genes. The effect of MC is to increase ion and water transport and thus raise extracellular fluid volume and blood pressure and lower potassium levels. The polypeptide is Mineralocorticoid receptor (NR3C2) (Aotus nancymaae (Ma's night monkey)).